Reading from the N-terminus, the 161-residue chain is Nucleotide-binding protein Aave_1854 (161 aa).

It belongs to the YajQ family.

Nucleotide-binding protein. The protein is Nucleotide-binding protein Aave_1854 of Paracidovorax citrulli (strain AAC00-1) (Acidovorax citrulli).